We begin with the raw amino-acid sequence, 45 residues long: Ice-structuring protein SS-8 (45 aa).

Position 1 is a blocked amino end (Met) (methionine 1). 3 repeats span residues 9 to 21, 22 to 33, and 34 to 45; these read KAAR…ALAA, KTAADAAAKAAA, and KAAAIAAAAASA.

The protein belongs to the type-I AFP family.

Functionally, antifreeze proteins lower the blood freezing point. The polypeptide is Ice-structuring protein SS-8 (Myoxocephalus scorpius (Shorthorn sculpin)).